The primary structure comprises 163 residues: Large ribosomal subunit protein uL10 (163 aa).

It belongs to the universal ribosomal protein uL10 family. In terms of assembly, part of the ribosomal stalk of the 50S ribosomal subunit. The N-terminus interacts with L11 and the large rRNA to form the base of the stalk. The C-terminus forms an elongated spine to which L12 dimers bind in a sequential fashion forming a multimeric L10(L12)X complex.

Functionally, forms part of the ribosomal stalk, playing a central role in the interaction of the ribosome with GTP-bound translation factors. The polypeptide is Large ribosomal subunit protein uL10 (Haemophilus influenzae (strain 86-028NP)).